Consider the following 365-residue polypeptide: Histidinol-phosphate aminotransferase (365 aa).

Lysine 220 is modified (N6-(pyridoxal phosphate)lysine).

The protein belongs to the class-II pyridoxal-phosphate-dependent aminotransferase family. Histidinol-phosphate aminotransferase subfamily. Homodimer. The cofactor is pyridoxal 5'-phosphate.

The catalysed reaction is L-histidinol phosphate + 2-oxoglutarate = 3-(imidazol-4-yl)-2-oxopropyl phosphate + L-glutamate. The protein operates within amino-acid biosynthesis; L-histidine biosynthesis; L-histidine from 5-phospho-alpha-D-ribose 1-diphosphate: step 7/9. The chain is Histidinol-phosphate aminotransferase from Xylella fastidiosa (strain 9a5c).